The chain runs to 235 residues: Lipoprotein-releasing system ATP-binding protein LolD (235 aa).

Residues 7–234 enclose the ABC transporter domain; it reads LQCTNLSKRY…QQELTLMGAR (228 aa). 43–50 contributes to the ATP binding site; sequence GSSGSGKS.

It belongs to the ABC transporter superfamily. Lipoprotein translocase (TC 3.A.1.125) family. The complex is composed of two ATP-binding proteins (LolD) and two transmembrane proteins (LolC and LolE).

Its subcellular location is the cell inner membrane. Part of the ABC transporter complex LolCDE involved in the translocation of mature outer membrane-directed lipoproteins, from the inner membrane to the periplasmic chaperone, LolA. Responsible for the formation of the LolA-lipoprotein complex in an ATP-dependent manner. The protein is Lipoprotein-releasing system ATP-binding protein LolD of Pectobacterium atrosepticum (strain SCRI 1043 / ATCC BAA-672) (Erwinia carotovora subsp. atroseptica).